The following is a 527-amino-acid chain: Phosphoethanolamine transferase OpgE (527 aa).

Over 1–33 the chain is Periplasmic; it reads MNLTLKESLVTRSRVFSPWTAFYFLQSLLINLG. The helical transmembrane segment at 34–54 threads the bilayer; sequence LGYPFSLLYTAAFTAILLLLW. Residues 55–62 lie on the Cytoplasmic side of the membrane; it reads RTLPRVQK. Residues 63 to 83 traverse the membrane as a helical segment; it reads VLVGVSSLVAACYFPFAQAYG. The Periplasmic segment spans residues 84 to 106; that stretch reads APNFNTLLALHSTNMEESTEILT. A helical transmembrane segment spans residues 107–127; that stretch reads IFPWYSYLVGLFIFALGVIAI. Residues 128–146 are Cytoplasmic-facing; it reads RRKKENEKARWNTFDSLCL. The helical transmembrane segment at 147–167 threads the bilayer; it reads VFSVATFFVAPVQNLAWGGVF. Topologically, residues 168–527 are periplasmic; sequence KLKDTGYPVF…LGTDIFDPKP (360 aa).

The protein belongs to the phosphoethanolamine transferase family.

The protein resides in the cell inner membrane. The protein operates within glycan metabolism; osmoregulated periplasmic glucan (OPG) biosynthesis. In terms of biological role, catalyzes the addition of a phosphoethanolamine moiety to the osmoregulated periplasmic glucan (OPG) backbone. This Escherichia coli (strain K12) protein is Phosphoethanolamine transferase OpgE (opgE).